Consider the following 342-residue polypeptide: Anthranilate phosphoribosyltransferase (342 aa).

Residues G90, 93–94 (GD), T98, 100–103 (NIST), 118–126 (KHGNRSVSS), and A130 contribute to the 5-phospho-alpha-D-ribose 1-diphosphate site. Anthranilate is bound at residue G90. Position 102 (S102) interacts with Mg(2+). N121 is a binding site for anthranilate. R176 serves as a coordination point for anthranilate. The Mg(2+) site is built by D234 and E235.

This sequence belongs to the anthranilate phosphoribosyltransferase family. In terms of assembly, homodimer. Mg(2+) serves as cofactor.

It carries out the reaction N-(5-phospho-beta-D-ribosyl)anthranilate + diphosphate = 5-phospho-alpha-D-ribose 1-diphosphate + anthranilate. It participates in amino-acid biosynthesis; L-tryptophan biosynthesis; L-tryptophan from chorismate: step 2/5. Its function is as follows. Catalyzes the transfer of the phosphoribosyl group of 5-phosphorylribose-1-pyrophosphate (PRPP) to anthranilate to yield N-(5'-phosphoribosyl)-anthranilate (PRA). The polypeptide is Anthranilate phosphoribosyltransferase (Mannheimia succiniciproducens (strain KCTC 0769BP / MBEL55E)).